We begin with the raw amino-acid sequence, 303 residues long: Probable alpha-L-glutamate ligase 1 (303 aa).

An ATP-grasp domain is found at 104-287 (LQLLSRKGVG…IAGLIYSFIE (184 aa)). Residues Lys-141, 178 to 179 (EF), Asp-187, and 211 to 213 (RSN) each bind ATP. Mg(2+)-binding residues include Asp-248, Glu-260, and Asn-262. Residues Asp-248, Glu-260, and Asn-262 each contribute to the Mn(2+) site.

Belongs to the RimK family. Mg(2+) is required as a cofactor. Mn(2+) serves as cofactor.

The sequence is that of Probable alpha-L-glutamate ligase 1 from Hahella chejuensis (strain KCTC 2396).